The following is a 385-amino-acid chain: uncharacterized protein (385 aa).

This sequence belongs to the mimivirus L17x/L18x family.

This is an uncharacterized protein from Acanthamoeba polyphaga mimivirus (APMV).